The sequence spans 198 residues: NAD(P)H quinone oxidoreductase PST1 (198 aa).

Residues 6 to 192 (VAIIIYSLYH…AIAKQQGEDF (187 aa)) enclose the Flavodoxin-like domain. Residues 12-16 (SLYHH) and 112-164 (VFVW…SPWG) contribute to the FMN site.

The protein belongs to the WrbA family. FMN is required as a cofactor.

It is found in the cell membrane. The enzyme catalyses a quinone + NADH + H(+) = a quinol + NAD(+). It catalyses the reaction a quinone + NADPH + H(+) = a quinol + NADP(+). Its function is as follows. Flavodoxin-like protein (FLP) that plays a role in cell wall integrity, oxidative stress protection and virulence. FLPs act as NAD(P)H quinone oxidoreductases. Reduces ubiquinone (coenzyme Q), enabling it to serve as an antioxidant in the membrane. In Candida albicans (strain SC5314 / ATCC MYA-2876) (Yeast), this protein is NAD(P)H quinone oxidoreductase PST1.